The sequence spans 269 residues: Hydroxyethylthiazole kinase (269 aa).

A substrate-binding site is contributed by methionine 42. ATP is bound by residues arginine 118 and serine 164. Residue glycine 191 coordinates substrate.

Belongs to the Thz kinase family. It depends on Mg(2+) as a cofactor.

It carries out the reaction 5-(2-hydroxyethyl)-4-methylthiazole + ATP = 4-methyl-5-(2-phosphooxyethyl)-thiazole + ADP + H(+). The protein operates within cofactor biosynthesis; thiamine diphosphate biosynthesis; 4-methyl-5-(2-phosphoethyl)-thiazole from 5-(2-hydroxyethyl)-4-methylthiazole: step 1/1. Its function is as follows. Catalyzes the phosphorylation of the hydroxyl group of 4-methyl-5-beta-hydroxyethylthiazole (THZ). This chain is Hydroxyethylthiazole kinase, found in Listeria monocytogenes serotype 4b (strain F2365).